Reading from the N-terminus, the 70-residue chain is Large ribosomal subunit protein bL31 (70 aa).

Positions 16, 18, 37, and 40 each coordinate Zn(2+).

Belongs to the bacterial ribosomal protein bL31 family. Type A subfamily. In terms of assembly, part of the 50S ribosomal subunit. The cofactor is Zn(2+).

Binds the 23S rRNA. The protein is Large ribosomal subunit protein bL31 of Shewanella baltica (strain OS223).